The following is a 396-amino-acid chain: uncharacterized protein (396 aa).

The next 11 helical transmembrane spans lie at 7–27 (SDDV…SIGL), 36–56 (AVSG…VGVL), 62–82 (VYDT…LFQI), 94–114 (LLFI…LAFF), 159–179 (VVAD…IPAL), 218–238 (IAFN…VSGY), 250–270 (GTLG…IFLF), 285–305 (TFLI…RLIV), 310–330 (LILL…LAAG), 340–360 (ILLA…MAIA), and 367–387 (VAPI…VGTF).

The protein resides in the cell membrane. This is an uncharacterized protein from Bacillus subtilis (strain 168).